The primary structure comprises 168 residues: Pollen allergen Cro s 1 (168 aa).

An N-terminal signal peptide occupies residues 1-26 (MGKCQAVFLLVGALCVLSLAGVANAA). 3 cysteine pairs are disulfide-bonded: Cys-38/Cys-109, Cys-41/Cys-153, and Cys-62/Cys-97. Asn-64 is a glycosylation site (N-linked (GlcNAc...) asparagine).

This sequence belongs to the Ole e I family. In terms of tissue distribution, expressed in pollen.

It is found in the secreted. The polypeptide is Pollen allergen Cro s 1 (Crocus sativus (Saffron)).